A 1063-amino-acid polypeptide reads, in one-letter code: Unconventional myosin-Ic (1063 aa).

Position 1 is an N-acetylmethionine (Met-1). Thr-10 is modified (phosphoserine). The region spanning 47–731 (GVQDFVLLEN…TLFATEDSLE (685 aa)) is the Myosin motor domain. ATP is bound by residues Asn-88, Tyr-96, 139–148 (SGESGAGKTE), and 192–196 (NDNSS). Lys-383 carries the post-translational modification N6-methyllysine. The residue at position 408 (Ser-408) is a Phosphoserine. An N6-acetyllysine modification is found at Lys-486. Ser-536 bears the Phosphoserine mark. The segment at 608 to 630 (LLQLVEILRSKEPAYIRCIKPND) is actin-binding. 2 IQ domains span residues 734-757 (RQSLATKIQAAWRGFHWRQKFLRV) and 758-786 (KRSAICIQSWWRGTLGRRKAAKRKWAAQT). A phosphoserine mark is found at Ser-864 and Ser-1041. Positions 885 to 1059 (KDNYPQSVPR…NGHLAVVAPR (175 aa)) constitute a TH1 domain.

The protein belongs to the TRAFAC class myosin-kinesin ATPase superfamily. Myosin family. In terms of assembly, interacts (via its IQ motifs) with CABP1 and CIB1; the interaction with CABP1 and CIB1 is calcium-dependent. Interacts (via tail domain) with PLEKHB1 (via PH domain); the interaction is not affected by the presence or absence of calcium and CALM. Interacts with POLR1A. Interacts with POLR2A. Component of the B-WICH complex, at least composed of SMARCA5/SNF2H, BAZ1B/WSTF, SF3B1, DEK, MYO1C, ERCC6, MYBBP1A and DDX21. Interacts (via its IQ motifs) with CALM; this precludes interaction with YWHAB. Interacts with YWHAB; this precludes interaction with CALM. Interacts with RPS6. Interacts with actin. Interacts with LLPH. Interacts with GLUT4. Interacts (via its IQ motifs) with SH3BGRL3; the interaction is dependent on calcium and takes place at membrane ruffles. Isoform 2 contains a N-acetylmethionine at position 1. Isoform 3 is expressed in small intestine, pancreas, brain, kidney, skin, heart muscle, testis, striated muscle, spleen, liver and lung (at protein level). Expressed in brain, testis, adrenal glands, thymus, spleen, kidney, lung, heart, cochlea and vestibule. Expressed in sensory hair cells of the inner ear. Expressed in adipocytes.

It is found in the cytoplasm. The protein localises to the nucleus. The protein resides in the cell cortex. It localises to the cell projection. Its subcellular location is the stereocilium membrane. It is found in the cytoplasmic vesicle. The protein localises to the ruffle membrane. The protein resides in the nucleolus. It localises to the nucleoplasm. Myosins are actin-based motor molecules with ATPase activity. Unconventional myosins serve in intracellular movements. Their highly divergent tails bind to membranous compartments, which then are moved relative to actin filaments. Involved in glucose transporter recycling in response to insulin by regulating movement of intracellular GLUT4-containing vesicles to the plasma membrane. Component of the hair cell's (the sensory cells of the inner ear) adaptation-motor complex. Acts as a mediator of adaptation of mechanoelectrical transduction in stereocilia of vestibular hair cells. Binds phosphoinositides and links the actin cytoskeleton to cellular membranes. Its function is as follows. Involved in regulation of transcription. Associated with transcriptional active ribosomal genes. Appears to cooperate with the WICH chromatin-remodeling complex to facilitate transcription. Necessary for the formation of the first phosphodiester bond during transcription initiation. This Mus musculus (Mouse) protein is Unconventional myosin-Ic (Myo1c).